Consider the following 313-residue polypeptide: Ribosomal RNA small subunit methyltransferase H (313 aa).

S-adenosyl-L-methionine contacts are provided by residues 35-37 (GGH), Asp55, Phe80, Asp102, and Gln109.

Belongs to the methyltransferase superfamily. RsmH family.

Its subcellular location is the cytoplasm. It catalyses the reaction cytidine(1402) in 16S rRNA + S-adenosyl-L-methionine = N(4)-methylcytidine(1402) in 16S rRNA + S-adenosyl-L-homocysteine + H(+). Functionally, specifically methylates the N4 position of cytidine in position 1402 (C1402) of 16S rRNA. The polypeptide is Ribosomal RNA small subunit methyltransferase H (Shewanella frigidimarina (strain NCIMB 400)).